The chain runs to 232 residues: RNA chaperone ProQ (232 aa).

The interval 105-182 (EAKARVQAQR…REEQHTPVSD (78 aa)) is disordered. The segment covering 117 to 136 (QQAKKREAAATAGEKEDAPR) has biased composition (basic and acidic residues). Basic residues predominate over residues 137-146 (RERKPRPTTP). Residues 147–177 (RRKEGAERKPRAQKPVEKAPKTVKAPREEQH) show a composition bias toward basic and acidic residues.

It belongs to the ProQ family.

It is found in the cytoplasm. Its function is as follows. RNA chaperone with significant RNA binding, RNA strand exchange and RNA duplexing activities. May regulate ProP activity through an RNA-based, post-transcriptional mechanism. This chain is RNA chaperone ProQ, found in Escherichia coli (strain K12).